We begin with the raw amino-acid sequence, 279 residues long: Undecaprenyl-diphosphatase (279 aa).

8 helical membrane passes run 2-22 (LIIE…TEWL), 44-64 (AFIE…VMLI), 85-105 (WQLW…AVPL), 113-133 (FYFM…FIWI), 163-183 (VLSI…AIIL), 188-208 (TVAA…YSGL), 223-243 (AQVL…LLAI), and 255-275 (FTIF…YSFF).

This sequence belongs to the UppP family.

The protein resides in the cell membrane. It catalyses the reaction di-trans,octa-cis-undecaprenyl diphosphate + H2O = di-trans,octa-cis-undecaprenyl phosphate + phosphate + H(+). In terms of biological role, catalyzes the dephosphorylation of undecaprenyl diphosphate (UPP). Confers resistance to bacitracin. This Streptococcus pyogenes serotype M12 (strain MGAS2096) protein is Undecaprenyl-diphosphatase.